A 378-amino-acid chain; its full sequence is Protein RecA (378 aa).

Residue glycine 79–threonine 86 coordinates ATP.

Belongs to the RecA family.

Its subcellular location is the cytoplasm. Can catalyze the hydrolysis of ATP in the presence of single-stranded DNA, the ATP-dependent uptake of single-stranded DNA by duplex DNA, and the ATP-dependent hybridization of homologous single-stranded DNAs. It interacts with LexA causing its activation and leading to its autocatalytic cleavage. In Streptococcus equi subsp. zooepidemicus (strain H70), this protein is Protein RecA.